The primary structure comprises 400 residues: Subtilisin-like protease 7 (400 aa).

An N-terminal signal peptide occupies residues 1–20 (MGFITKAIPLALAAASVING). The propeptide occupies 21-119 (AEILETRAGV…IERDARVQIN (99 aa)). The Inhibitor I9 domain occupies 36-118 (KYIVVMNDGI…YIERDARVQI (83 aa)). Positions 129 to 400 (SWGLARVGSK…SKLINNGSGM (272 aa)) constitute a Peptidase S8 domain. Catalysis depends on charge relay system residues Asp161 and His192. Residues Asn222 and Asn252 are each glycosylated (N-linked (GlcNAc...) asparagine). Ser346 (charge relay system) is an active-site residue. A glycan (N-linked (GlcNAc...) asparagine) is linked at Asn396.

The protein belongs to the peptidase S8 family.

It is found in the secreted. Functionally, secreted subtilisin-like serine protease with keratinolytic activity that contributes to pathogenicity. This Trichophyton soudanense protein is Subtilisin-like protease 7 (SUB7).